The chain runs to 52 residues: ATP synthase protein 8 (52 aa).

A helical membrane pass occupies residues 6–26; it reads PINGFVILCSISLMLLTLLIN.

This sequence belongs to the ATPase protein 8 family. As to quaternary structure, F-type ATPases have 2 components, CF(1) - the catalytic core - and CF(0) - the membrane proton channel.

It localises to the mitochondrion membrane. Functionally, mitochondrial membrane ATP synthase (F(1)F(0) ATP synthase or Complex V) produces ATP from ADP in the presence of a proton gradient across the membrane which is generated by electron transport complexes of the respiratory chain. F-type ATPases consist of two structural domains, F(1) - containing the extramembraneous catalytic core and F(0) - containing the membrane proton channel, linked together by a central stalk and a peripheral stalk. During catalysis, ATP synthesis in the catalytic domain of F(1) is coupled via a rotary mechanism of the central stalk subunits to proton translocation. Part of the complex F(0) domain. Minor subunit located with subunit a in the membrane. The chain is ATP synthase protein 8 (MT-ATP8) from Albinaria turrita (Door snail).